We begin with the raw amino-acid sequence, 129 residues long: Cytochrome c oxidase subunit 5B, mitochondrial (129 aa).

Residues 1–31 constitute a mitochondrion transit peptide; that stretch reads MASRLLRGAGALAAQTLRARGPNGVAVVRSM. Lysine 68 and lysine 86 each carry N6-acetyllysine. Cysteine 91, cysteine 93, cysteine 113, and cysteine 116 together coordinate Zn(2+). Lysine 121 carries the N6-acetyllysine modification.

This sequence belongs to the cytochrome c oxidase subunit 5B family. In terms of assembly, component of the cytochrome c oxidase (complex IV, CIV), a multisubunit enzyme composed of 14 subunits. The complex is composed of a catalytic core of 3 subunits MT-CO1, MT-CO2 and MT-CO3, encoded in the mitochondrial DNA, and 11 supernumerary subunits COX4I, COX5A, COX5B, COX6A, COX6B, COX6C, COX7A, COX7B, COX7C, COX8 and NDUFA4, which are encoded in the nuclear genome. The complex exists as a monomer or a dimer and forms supercomplexes (SCs) in the inner mitochondrial membrane with NADH-ubiquinone oxidoreductase (complex I, CI) and ubiquinol-cytochrome c oxidoreductase (cytochrome b-c1 complex, complex III, CIII), resulting in different assemblies (supercomplex SCI(1)III(2)IV(1) and megacomplex MCI(2)III(2)IV(2)).

It localises to the mitochondrion inner membrane. It functions in the pathway energy metabolism; oxidative phosphorylation. Component of the cytochrome c oxidase, the last enzyme in the mitochondrial electron transport chain which drives oxidative phosphorylation. The respiratory chain contains 3 multisubunit complexes succinate dehydrogenase (complex II, CII), ubiquinol-cytochrome c oxidoreductase (cytochrome b-c1 complex, complex III, CIII) and cytochrome c oxidase (complex IV, CIV), that cooperate to transfer electrons derived from NADH and succinate to molecular oxygen, creating an electrochemical gradient over the inner membrane that drives transmembrane transport and the ATP synthase. Cytochrome c oxidase is the component of the respiratory chain that catalyzes the reduction of oxygen to water. Electrons originating from reduced cytochrome c in the intermembrane space (IMS) are transferred via the dinuclear copper A center (CU(A)) of subunit 2 and heme A of subunit 1 to the active site in subunit 1, a binuclear center (BNC) formed by heme A3 and copper B (CU(B)). The BNC reduces molecular oxygen to 2 water molecules using 4 electrons from cytochrome c in the IMS and 4 protons from the mitochondrial matrix. The sequence is that of Cytochrome c oxidase subunit 5B, mitochondrial (COX5B) from Sus scrofa (Pig).